The primary structure comprises 504 residues: Maturase K (504 aa).

This sequence belongs to the intron maturase 2 family. MatK subfamily.

It localises to the plastid. It is found in the chloroplast. Usually encoded in the trnK tRNA gene intron. Probably assists in splicing its own and other chloroplast group II introns. This is Maturase K from Quercus robur (English oak).